Consider the following 166-residue polypeptide: NADH-quinone oxidoreductase subunit B 1 (166 aa).

4 residues coordinate [4Fe-4S] cluster: Cys-39, Cys-40, Cys-106, and Cys-135.

This sequence belongs to the complex I 20 kDa subunit family. NDH-1 is composed of 14 different subunits. Subunits NuoB, C, D, E, F, and G constitute the peripheral sector of the complex. [4Fe-4S] cluster is required as a cofactor.

Its subcellular location is the cell membrane. It carries out the reaction a quinone + NADH + 5 H(+)(in) = a quinol + NAD(+) + 4 H(+)(out). NDH-1 shuttles electrons from NADH, via FMN and iron-sulfur (Fe-S) centers, to quinones in the respiratory chain. The immediate electron acceptor for the enzyme in this species is believed to be a menaquinone. Couples the redox reaction to proton translocation (for every two electrons transferred, four hydrogen ions are translocated across the cytoplasmic membrane), and thus conserves the redox energy in a proton gradient. The polypeptide is NADH-quinone oxidoreductase subunit B 1 (Symbiobacterium thermophilum (strain DSM 24528 / JCM 14929 / IAM 14863 / T)).